The following is a 446-amino-acid chain: MINKIVKNVIENQFKGYNKLKDLPISLFVYWPYCSKICPYCNFNKYRDSDKVDHERMSKSLSRELESFVKNIYLNSNENSFIRERPITSIYFGGGTPSLAKISTFVETIETMKKLFPSSLSIEDIEITLEVNPDQKDLKNLLKDFKKYVGVNRVSLGVQSLVDKDLHFLGRTHNRIQAEESIKIARDLFDHVTFDLIYSRTIDQTLEQWRNELRYALNLADGNGHVSLYTLTFEQGTSFYRRLSSKGNKFKIIPPDDQKSSDLYDLTVCEAEAMGFQQYEISSFASSHNQKGKHNLNYWRSGDFIGIGPGASSRLTTLNNNNNNNNQISRYSFKNILHPKEWMEKLNSKEILCNAFIEDEFNPTIPLTNFEVAEEMLLNGLRTIEGVQLSTFTFQTNGLTFDQFLNMKQVEILQEQGFLILEPTCLKLTGNGRKLLDTIIPKILKY.

The region spanning 15–277 (KGYNKLKDLP…VCEAEAMGFQ (263 aa)) is the Radical SAM core domain. Residues C34, C38, and C41 each coordinate [4Fe-4S] cluster. S-adenosyl-L-methionine-binding positions include G94, 95 to 96 (GT), E130, Q159, R171, and D195.

It belongs to the anaerobic coproporphyrinogen-III oxidase family. HemW subfamily.

The protein localises to the mitochondrion. Functionally, may be a heme chaperone, appears to bind heme. Homologous bacterial proteins do not have oxygen-independent coproporphyrinogen-III oxidase activity. Binds 1 [4Fe-4S] cluster. The cluster is coordinated with 3 cysteines and an exchangeable S-adenosyl-L-methionine. The sequence is that of Radical S-adenosyl methionine domain-containing protein 1, mitochondrial (rsad1) from Dictyostelium discoideum (Social amoeba).